The following is a 271-amino-acid chain: Bis(5'-nucleosyl)-tetraphosphatase, symmetrical (271 aa).

The protein belongs to the Ap4A hydrolase family.

It catalyses the reaction P(1),P(4)-bis(5'-adenosyl) tetraphosphate + H2O = 2 ADP + 2 H(+). Hydrolyzes diadenosine 5',5'''-P1,P4-tetraphosphate to yield ADP. This is Bis(5'-nucleosyl)-tetraphosphatase, symmetrical from Aliivibrio fischeri (strain MJ11) (Vibrio fischeri).